The following is a 173-amino-acid chain: uncharacterized protein (173 aa).

The next 3 helical transmembrane spans lie at 24 to 44, 82 to 102, and 135 to 155; these read VAFI…WLFF, YILF…SYFI, and LIKR…ILFS.

The protein resides in the cell membrane. This is an uncharacterized protein from Rickettsia prowazekii (strain Madrid E).